Here is a 335-residue protein sequence, read N- to C-terminus: MKTLDEFIVDRQAEYPNAKGALTGILSSIRLVAKVIHRDINRAGLTNNILGFSGIDNVQGEHQMKLDLFAHNMMKQALMAREEVAGFASEEEENFVAFDTERGRNARYVILTDPLDGSSNIDVNVSVGTIFSIYRRVSPIGSPVTLEDFMQPGNRQVAAGYVVYGSSTMLVYTTGNGVNGFTYDPSLGTFCLSHENMQIPATGKIYSINEGQYLKFPMGVKKYIKYCQEEDAATNRPYTSRYIGSLVADFHRNLLKGGIYIYPHATNYPQGKLRLLYEGNPIAFLAEQAGGIASDGYNRVLDIQPSQLHQRVPLFVGSKQMVEKAQDFMHQFKED.

Mg(2+) is bound by residues Glu-90, Asp-113, Leu-115, and Asp-116. Residues 116-119, Asn-209, Tyr-242, and Lys-272 contribute to the substrate site; that span reads DGSS. Glu-278 is a Mg(2+) binding site.

This sequence belongs to the FBPase class 1 family. Homotetramer. Requires Mg(2+) as cofactor.

It is found in the cytoplasm. The enzyme catalyses beta-D-fructose 1,6-bisphosphate + H2O = beta-D-fructose 6-phosphate + phosphate. It participates in carbohydrate biosynthesis; gluconeogenesis. The polypeptide is Fructose-1,6-bisphosphatase class 1 (Mannheimia succiniciproducens (strain KCTC 0769BP / MBEL55E)).